A 146-amino-acid polypeptide reads, in one-letter code: Hemoglobin subunit theta (146 aa).

The Globin domain maps to 2–146; that stretch reads HFTAEEKSVI…VATALAHKYH (145 aa). Positions 63 and 92 each coordinate heme b.

This sequence belongs to the globin family.

The polypeptide is Hemoglobin subunit theta (Sus scrofa (Pig)).